We begin with the raw amino-acid sequence, 419 residues long: MTTQLEQAWELAKQRFAAVGIDVEEALRQLDRLPVSMHCWQGDDVAGFENPEGSLTGGIQSTGNYPGKARNATELRADLEQALRLIPGPKRLNLHAIYLESDTPVARDQIKPEHFKNWVEWAKANRLGLDFNPTCFSHPLSADGFTLSHPDAKIRQFWIDHCKASRRVSAYFGEQLGTPSVMNIWIPDGMKDITVDRLAPRQRLLEALDEVISEKFDPAHHIDAVESKLFGIGAESYTVGSNEFYMGYATSRQTALCLDAGHFHPTEVISDKISAAMLYVPRLLLHVSRPVRWDSDHVVLLDDETQAIASEIVRHNLFDRVHIGLDFFDASINRVAAWVIGTRNMKKALLRALLEPTDQLRQLEASGDYTARLALLEEQKSLPWQAVWEMYCQRHDTPTGSQWLDSVRTYEKEILSKRS.

Residues histidine 262, aspartate 294, and aspartate 296 each coordinate Mn(2+).

This sequence belongs to the rhamnose isomerase family. As to quaternary structure, homotetramer. Mn(2+) serves as cofactor.

The protein localises to the cytoplasm. It catalyses the reaction L-rhamnopyranose = L-rhamnulose. The protein operates within carbohydrate degradation; L-rhamnose degradation; glycerone phosphate from L-rhamnose: step 1/3. In terms of biological role, catalyzes the interconversion of L-rhamnose and L-rhamnulose. This Salmonella choleraesuis (strain SC-B67) protein is L-rhamnose isomerase.